Reading from the N-terminus, the 342-residue chain is S-adenosylmethionine:tRNA ribosyltransferase-isomerase (342 aa).

Belongs to the QueA family. In terms of assembly, monomer.

The protein resides in the cytoplasm. The enzyme catalyses 7-aminomethyl-7-carbaguanosine(34) in tRNA + S-adenosyl-L-methionine = epoxyqueuosine(34) in tRNA + adenine + L-methionine + 2 H(+). The protein operates within tRNA modification; tRNA-queuosine biosynthesis. Transfers and isomerizes the ribose moiety from AdoMet to the 7-aminomethyl group of 7-deazaguanine (preQ1-tRNA) to give epoxyqueuosine (oQ-tRNA). The protein is S-adenosylmethionine:tRNA ribosyltransferase-isomerase of Streptococcus pyogenes serotype M12 (strain MGAS2096).